The primary structure comprises 590 residues: Beta-fructofuranosidase, cell wall isozyme (590 aa).

The first 28 residues, 1–28, serve as a signal peptide directing secretion; it reads MGTRPRGVVLAPWAVVLVLVLALRLAGA. Aspartate 68 is a catalytic residue. N-linked (GlcNAc...) asparagine glycans are attached at residues asparagine 190 and asparagine 341.

It belongs to the glycosyl hydrolase 32 family.

Its subcellular location is the secreted. It is found in the cell wall. It carries out the reaction Hydrolysis of terminal non-reducing beta-D-fructofuranoside residues in beta-D-fructofuranosides.. The polypeptide is Beta-fructofuranosidase, cell wall isozyme (Zea mays (Maize)).